The chain runs to 284 residues: 4-hydroxybenzoate octaprenyltransferase (284 aa).

Helical transmembrane passes span 19-39 (IPIL…SHGL), 42-62 (ISYL…GCII), 85-105 (GQLS…VAFI), 107-127 (VLFL…LAIL), 134-154 (FFAI…FMAF), 165-185 (AWIF…IYAL), 211-231 (ILLF…YCDF), 233-253 (SFFY…YFLY), and 261-281 (CINA…IAVI).

Belongs to the UbiA prenyltransferase family. It depends on Mg(2+) as a cofactor.

It is found in the cell inner membrane. It carries out the reaction all-trans-octaprenyl diphosphate + 4-hydroxybenzoate = 4-hydroxy-3-(all-trans-octaprenyl)benzoate + diphosphate. It functions in the pathway cofactor biosynthesis; ubiquinone biosynthesis. In terms of biological role, catalyzes the prenylation of para-hydroxybenzoate (PHB) with an all-trans polyprenyl group. Mediates the second step in the final reaction sequence of ubiquinone-8 (UQ-8) biosynthesis, which is the condensation of the polyisoprenoid side chain with PHB, generating the first membrane-bound Q intermediate 3-octaprenyl-4-hydroxybenzoate. In Francisella tularensis subsp. holarctica (strain LVS), this protein is 4-hydroxybenzoate octaprenyltransferase.